Consider the following 341-residue polypeptide: Phospholipid phosphatase homolog 1.2 homolog (341 aa).

3 consecutive transmembrane segments (helical) span residues 30 to 50 (LFIF…LLGV), 71 to 91 (ITAV…VLFV), and 122 to 142 (LLTY…LNIV). Residue asparagine 162 is glycosylated (N-linked (GlcNAc...) asparagine). Transmembrane regions (helical) follow at residues 223–243 (RIVV…ISFS) and 257–277 (VGIF…TDLF). 2 disordered regions span residues 284-308 (SETQ…ERHR) and 322-341 (FEAT…PQSA). Positions 299-308 (RNSEDEERHR) are enriched in basic and acidic residues.

This sequence belongs to the PA-phosphatase related phosphoesterase family.

Its subcellular location is the membrane. The sequence is that of Phospholipid phosphatase homolog 1.2 homolog from Caenorhabditis elegans.